The chain runs to 132 residues: CLAVATA3/ESR (CLE)-related protein ESR2 (132 aa).

The signal sequence occupies residues 1–26 (MASRMGMVAIVSLFVCALVASTSVNA). The disordered stretch occupies residues 68–132 (NRASKQLDSE…IGPPPFLDRY (65 aa)). Proline 82 and proline 85 each carry hydroxyproline. A glycan (O-linked (Ara...) hydroxyproline) is linked at proline 85. The segment covering 123–132 (IGPPPFLDRY) has biased composition (pro residues).

Belongs to the CLV3/ESR signal peptide family. In terms of processing, the O-glycosylation (arabinosylation) of the hydroxyproline Pro-85 enhances binding affinity of the ESR2p peptide for its receptor. As to expression, seed endosperm.

Its subcellular location is the secreted. The protein resides in the extracellular space. In terms of biological role, extracellular signal peptide that regulates cell fate. This chain is CLAVATA3/ESR (CLE)-related protein ESR2, found in Zea mays (Maize).